The sequence spans 62 residues: Small ribosomal subunit protein eS27 (62 aa).

4 residues coordinate Zn(2+): Cys17, Cys20, Cys36, and Cys39. Residues 17-39 (CPDCENEQTIFDRACTPVDCIVC) form a C4-type zinc finger.

The protein belongs to the eukaryotic ribosomal protein eS27 family. As to quaternary structure, part of the 30S ribosomal subunit. It depends on Zn(2+) as a cofactor.

This is Small ribosomal subunit protein eS27 from Methanospirillum hungatei JF-1 (strain ATCC 27890 / DSM 864 / NBRC 100397 / JF-1).